Consider the following 338-residue polypeptide: NADPH dehydrogenase (338 aa).

An FMN-binding site is contributed by 22 to 25 (SPMC). Tyr-27 serves as a coordination point for substrate. FMN is bound by residues Ala-59 and Gln-101. 163–166 (HAAH) provides a ligand contact to substrate. FMN is bound by residues Arg-214 and 306-307 (GR).

It belongs to the NADH:flavin oxidoreductase/NADH oxidase family. NamA subfamily. Homotetramer. It depends on FMN as a cofactor.

It catalyses the reaction A + NADPH + H(+) = AH2 + NADP(+). Its function is as follows. Catalyzes the reduction of the double bond of an array of alpha,beta-unsaturated aldehydes and ketones. It also reduces the nitro group of nitroester and nitroaromatic compounds. It could have a role in detoxification processes. In Listeria monocytogenes serovar 1/2a (strain ATCC BAA-679 / EGD-e), this protein is NADPH dehydrogenase.